Reading from the N-terminus, the 344-residue chain is MTAIIERRENSSLWARFCEWITSTENRLYIGWFGVLMVPTLLTATTVFIIGFIAAPPVDIDGIREPVSGSLLYGNNIISGAIVPTSNAIGLHFYPIWEAASVDEWLYNGGPYQMIVCHFFIGVCSYMGREWELSFRLGMRPWIAVAYSAPVAAATAVFIIYPIGQGSFSDGMPLGISGTFNFMIVFQAEHNILMHPFHMLGVAGVFGGSLFSAMHGSLVTSSLIRQTTENESTNNGYVFGQEEETYNIVAAHGYFGRLIFQYASFNNSRSLHFFLAAWPVIGIWFTAMGISTMAFNLNGFNFNQSIIDSQGRVINSWADIINRANLGMEVMHERNAHNFPLDLA.

3 helical membrane-spanning segments follow: residues 29–46 (YIGW…TATT), 118–133 (HFFI…EWEL), and 142–156 (WIAV…AATA). His118 lines the chlorophyll a pocket. Residue Tyr126 participates in pheophytin a binding. The [CaMn4O5] cluster site is built by Asp170 and Glu189. The helical transmembrane segment at 197–218 (FHMLGVAGVFGGSLFSAMHGSL) threads the bilayer. Residue His198 participates in chlorophyll a binding. Residues His215 and 264–265 (SF) contribute to the a quinone site. Fe cation is bound at residue His215. His272 provides a ligand contact to Fe cation. A helical transmembrane segment spans residues 274-288 (FLAAWPVIGIWFTAM). [CaMn4O5] cluster is bound by residues His332, Glu333, Asp342, and Ala344.

It belongs to the reaction center PufL/M/PsbA/D family. PSII is composed of 1 copy each of membrane proteins PsbA, PsbB, PsbC, PsbD, PsbE, PsbF, PsbH, PsbI, PsbJ, PsbK, PsbL, PsbM, PsbT, PsbY, PsbZ, Psb30/Ycf12, at least 3 peripheral proteins of the oxygen-evolving complex and a large number of cofactors. It forms dimeric complexes. The cofactor is The D1/D2 heterodimer binds P680, chlorophylls that are the primary electron donor of PSII, and subsequent electron acceptors. It shares a non-heme iron and each subunit binds pheophytin, quinone, additional chlorophylls, carotenoids and lipids. D1 provides most of the ligands for the Mn4-Ca-O5 cluster of the oxygen-evolving complex (OEC). There is also a Cl(-1) ion associated with D1 and D2, which is required for oxygen evolution. The PSII complex binds additional chlorophylls, carotenoids and specific lipids.. Post-translationally, tyr-161 forms a radical intermediate that is referred to as redox-active TyrZ, YZ or Y-Z.

The protein localises to the plastid. It is found in the chloroplast thylakoid membrane. It carries out the reaction 2 a plastoquinone + 4 hnu + 2 H2O = 2 a plastoquinol + O2. Functionally, photosystem II (PSII) is a light-driven water:plastoquinone oxidoreductase that uses light energy to abstract electrons from H(2)O, generating O(2) and a proton gradient subsequently used for ATP formation. It consists of a core antenna complex that captures photons, and an electron transfer chain that converts photonic excitation into a charge separation. The D1/D2 (PsbA/PsbD) reaction center heterodimer binds P680, the primary electron donor of PSII as well as several subsequent electron acceptors. The sequence is that of Photosystem II protein D1 from Bigelowiella natans (Pedinomonas minutissima).